The sequence spans 193 residues: Holliday junction branch migration complex subunit RuvA (193 aa).

The domain I stretch occupies residues 1 to 64 (MIGRIAGVLL…EDAHLLYGFG (64 aa)). The interval 65 to 139 (TAEERSTFRE…GKIGADLGAM (75 aa)) is domain II. The tract at residues 139-143 (MAGAA) is flexible linker. A domain III region spans residues 144–193 (SASDHASDILNALLALGYSEKEALAAVKNVPAGTGVSEGIKLALKALSKG).

This sequence belongs to the RuvA family. Homotetramer. Forms an RuvA(8)-RuvB(12)-Holliday junction (HJ) complex. HJ DNA is sandwiched between 2 RuvA tetramers; dsDNA enters through RuvA and exits via RuvB. An RuvB hexamer assembles on each DNA strand where it exits the tetramer. Each RuvB hexamer is contacted by two RuvA subunits (via domain III) on 2 adjacent RuvB subunits; this complex drives branch migration. In the full resolvosome a probable DNA-RuvA(4)-RuvB(12)-RuvC(2) complex forms which resolves the HJ.

Its subcellular location is the cytoplasm. Its function is as follows. The RuvA-RuvB-RuvC complex processes Holliday junction (HJ) DNA during genetic recombination and DNA repair, while the RuvA-RuvB complex plays an important role in the rescue of blocked DNA replication forks via replication fork reversal (RFR). RuvA specifically binds to HJ cruciform DNA, conferring on it an open structure. The RuvB hexamer acts as an ATP-dependent pump, pulling dsDNA into and through the RuvAB complex. HJ branch migration allows RuvC to scan DNA until it finds its consensus sequence, where it cleaves and resolves the cruciform DNA. This chain is Holliday junction branch migration complex subunit RuvA, found in Paraburkholderia xenovorans (strain LB400).